The primary structure comprises 150 residues: PTTG1IP family member 2 (150 aa).

The signal sequence occupies residues Met1–Ala19. At Leu20 to Asp98 the chain is on the extracellular side. An N-linked (GlcNAc...) asparagine glycan is attached at Asn26. The chain crosses the membrane as a helical span at residues Leu99–Cys119. The Cytoplasmic segment spans residues Leu120 to Trp150.

The protein resides in the membrane. This is PTTG1IP family member 2 from Mus musculus (Mouse).